An 827-amino-acid chain; its full sequence is Periplasmic nitrate reductase (827 aa).

Positions 1–34 (MSLTRRDFIKANAVAATAAAAGIATPAIAQPAKA) form a signal peptide, tat-type signal. Positions 36-92 (IRWDKGVCRFCGTGCAVLVGVQDGRVVATQGDPDSPVNRGLNCIKGYFLSKIMYGED) constitute a 4Fe-4S Mo/W bis-MGD-type domain. 4 residues coordinate [4Fe-4S] cluster: cysteine 43, cysteine 46, cysteine 50, and cysteine 78. Mo-bis(molybdopterin guanine dinucleotide) contacts are provided by residues lysine 80, glutamine 148, asparagine 173, cysteine 177, 210–217 (WGSNMAEM), 241–245 (STFEH), 260–262 (QTD), methionine 371, glutamine 375, asparagine 481, 507–508 (SD), lysine 530, aspartate 557, and 717–726 (TGRVLEHWHS). Substrate is bound at residue phenylalanine 793. Mo-bis(molybdopterin guanine dinucleotide)-binding residues include asparagine 801 and lysine 818.

It belongs to the prokaryotic molybdopterin-containing oxidoreductase family. NasA/NapA/NarB subfamily. Component of the periplasmic nitrate reductase NapAB complex composed of NapA and NapB. It depends on [4Fe-4S] cluster as a cofactor. Mo-bis(molybdopterin guanine dinucleotide) is required as a cofactor. Post-translationally, predicted to be exported by the Tat system. The position of the signal peptide cleavage has not been experimentally proven.

The protein localises to the periplasm. The enzyme catalyses 2 Fe(II)-[cytochrome] + nitrate + 2 H(+) = 2 Fe(III)-[cytochrome] + nitrite + H2O. Catalytic subunit of the periplasmic nitrate reductase complex NapAB. Receives electrons from NapB and catalyzes the reduction of nitrate to nitrite. In Paramagnetospirillum magneticum (strain ATCC 700264 / AMB-1) (Magnetospirillum magneticum), this protein is Periplasmic nitrate reductase.